We begin with the raw amino-acid sequence, 343 residues long: 3-dehydroquinate synthase (343 aa).

Residues 86–90 (GALLD), 110–111 (TT), Lys-123, and Lys-132 contribute to the NAD(+) site. Residues Glu-165, His-229, and His-243 each contribute to the Zn(2+) site.

It belongs to the sugar phosphate cyclases superfamily. Dehydroquinate synthase family. The cofactor is Co(2+). Zn(2+) serves as cofactor. Requires NAD(+) as cofactor.

It localises to the cytoplasm. The enzyme catalyses 7-phospho-2-dehydro-3-deoxy-D-arabino-heptonate = 3-dehydroquinate + phosphate. It participates in metabolic intermediate biosynthesis; chorismate biosynthesis; chorismate from D-erythrose 4-phosphate and phosphoenolpyruvate: step 2/7. Functionally, catalyzes the conversion of 3-deoxy-D-arabino-heptulosonate 7-phosphate (DAHP) to dehydroquinate (DHQ). The chain is 3-dehydroquinate synthase from Pyrobaculum islandicum (strain DSM 4184 / JCM 9189 / GEO3).